We begin with the raw amino-acid sequence, 279 residues long: ATP synthase subunit delta (279 aa).

It belongs to the ATPase delta chain family. In terms of assembly, F-type ATPases have 2 components, F(1) - the catalytic core - and F(0) - the membrane proton channel. F(1) has five subunits: alpha(3), beta(3), gamma(1), delta(1), epsilon(1). F(0) has three main subunits: a(1), b(2) and c(10-14). The alpha and beta chains form an alternating ring which encloses part of the gamma chain. F(1) is attached to F(0) by a central stalk formed by the gamma and epsilon chains, while a peripheral stalk is formed by the delta and b chains.

The protein localises to the cell membrane. Its function is as follows. F(1)F(0) ATP synthase produces ATP from ADP in the presence of a proton or sodium gradient. F-type ATPases consist of two structural domains, F(1) containing the extramembraneous catalytic core and F(0) containing the membrane proton channel, linked together by a central stalk and a peripheral stalk. During catalysis, ATP synthesis in the catalytic domain of F(1) is coupled via a rotary mechanism of the central stalk subunits to proton translocation. Functionally, this protein is part of the stalk that links CF(0) to CF(1). It either transmits conformational changes from CF(0) to CF(1) or is implicated in proton conduction. The polypeptide is ATP synthase subunit delta (Parafrankia sp. (strain EAN1pec)).